Here is a 406-residue protein sequence, read N- to C-terminus: MSYEKLLERFLTYVKINTRSNPNSTQTPTTQSQVDFALTVLKPEMEAIGLKDVHYLPSNGYLVGTLPATSDRLCHKIGFISHMDTADFNAENITPQIVDYKGGDIELGDSGYILSPKDFPNLNNYHGQTLITTDGKTLLGADDKSGIAEIMTAMEYLASHPEIEHCEIRVGFGPDEEIGIGADKFDVKDFDVDFAYTVDGGPLGELQYETFSAAGLELTFEGRNVHPGTAKNQMINALQLAMDFHSQLPENERPEQTDGYQGFYHLYDLSGTVDQAKSSYIIRDFEEVNFLKRKHLAQDIADNMNEALQSERVKVKLYDQYYNMKKVIEKDMTPINIAKEVMEELDIKPIIEPIRGGTDGSKISFMGIPTPNLFAGGENMHGRFEFVSLQTMEKAVDVILGIVAKD.

H82 serves as a coordination point for Zn(2+). The active site involves D84. D142 is a Zn(2+) binding site. E176 acts as the Proton acceptor in catalysis. Zn(2+) is bound by residues E177, D199, and H381.

This sequence belongs to the peptidase M20B family. Zn(2+) is required as a cofactor.

The protein localises to the cytoplasm. The catalysed reaction is Release of the N-terminal residue from a tripeptide.. In terms of biological role, cleaves the N-terminal amino acid of tripeptides. This is Peptidase T from Streptococcus agalactiae serotype III (strain NEM316).